We begin with the raw amino-acid sequence, 334 residues long: Cytosolic Fe-S cluster assembly factor NBP35 (334 aa).

The [4Fe-4S] cluster site is built by Cys-33, Cys-47, Cys-50, and Cys-56. 86–93 is an ATP binding site; that stretch reads GKGGVGKS. Residues Cys-259 and Cys-262 each contribute to the [4Fe-4S] cluster site.

It belongs to the Mrp/NBP35 ATP-binding proteins family. NUBP1/NBP35 subfamily. As to quaternary structure, heterotetramer of 2 NBP35 and 2 CFD1 chains. It depends on [4Fe-4S] cluster as a cofactor.

It is found in the cytoplasm. Its subcellular location is the nucleus. Component of the cytosolic iron-sulfur (Fe/S) protein assembly (CIA) machinery. Required for maturation of extramitochondrial Fe-S proteins. The NBP35-CFD1 heterotetramer forms a Fe-S scaffold complex, mediating the de novo assembly of an Fe-S cluster and its transfer to target apoproteins. Required for biogenesis and export of both ribosomal subunits, which may reflect a role in assembly of the Fe/S clusters in RLI1, a protein which performs rRNA processing and ribosome export. The protein is Cytosolic Fe-S cluster assembly factor NBP35 of Candida glabrata (strain ATCC 2001 / BCRC 20586 / JCM 3761 / NBRC 0622 / NRRL Y-65 / CBS 138) (Yeast).